Consider the following 97-residue polypeptide: uncharacterized protein (97 aa).

Disordered regions lie at residues 1 to 20 and 52 to 97; these read MTEG…IASD and VPAA…GRRA.

This is an uncharacterized protein from Paracoccus pantotrophus (Thiosphaera pantotropha).